Consider the following 452-residue polypeptide: Phosphoglucosamine mutase (452 aa).

The active-site Phosphoserine intermediate is the Ser101. Mg(2+) contacts are provided by Ser101, Asp241, Asp243, and Asp245. At Ser101 the chain carries Phosphoserine.

This sequence belongs to the phosphohexose mutase family. Mg(2+) is required as a cofactor. In terms of processing, activated by phosphorylation.

It catalyses the reaction alpha-D-glucosamine 1-phosphate = D-glucosamine 6-phosphate. Its function is as follows. Catalyzes the conversion of glucosamine-6-phosphate to glucosamine-1-phosphate. The polypeptide is Phosphoglucosamine mutase (Lactococcus lactis subsp. cremoris (strain MG1363)).